A 120-amino-acid polypeptide reads, in one-letter code: Autophagy-related protein 8d (120 aa).

G117 is lipidated: Phosphatidylethanolamine amidated glycine. Positions 118–120 (IFF) are cleaved as a propeptide — removed in mature form.

This sequence belongs to the ATG8 family. In terms of assembly, interacts with ATG4B. Interacts with NBR1. The C-terminal 3 residues are removed by ATG4 to expose Gly-117 at the C-terminus. This Gly-117 forms then a thioester bond with the 'Cys-558' of ATG7 (E1-like activating enzyme) before being transferred to the 'Cys-258' of ATG3 (the specific E2 conjugating enzyme), in order to be finally amidated with phosphatidylethanolamine. This lipid modification anchors ATG8 to autophagosomes. Constitutively expressed.

Its subcellular location is the cytoplasmic vesicle. The protein localises to the autophagosome membrane. It is found in the vacuole membrane. The protein resides in the cytoplasm. It localises to the cytoskeleton. Ubiquitin-like modifier involved in autophagosomes formation. May mediate the delivery of the autophagosomes to the vacuole via the microtubule cytoskeleton. The protein is Autophagy-related protein 8d (ATG8D) of Arabidopsis thaliana (Mouse-ear cress).